The chain runs to 275 residues: Polyamine aminopropyltransferase (275 aa).

A PABS domain is found at 2–235 (ELWFTEKQTK…GLWTFTIGSK (234 aa)). An S-methyl-5'-thioadenosine-binding site is contributed by glutamine 31. 2 residues coordinate spermidine: histidine 62 and aspartate 86. S-methyl-5'-thioadenosine-binding positions include glutamate 106 and 137–138 (DG). Aspartate 155 functions as the Proton acceptor in the catalytic mechanism. 155 to 158 (DSTE) is a spermidine binding site. Proline 162 provides a ligand contact to S-methyl-5'-thioadenosine.

The protein belongs to the spermidine/spermine synthase family. As to quaternary structure, homodimer or homotetramer.

The protein localises to the cytoplasm. The enzyme catalyses S-adenosyl 3-(methylsulfanyl)propylamine + putrescine = S-methyl-5'-thioadenosine + spermidine + H(+). It functions in the pathway amine and polyamine biosynthesis; spermidine biosynthesis; spermidine from putrescine: step 1/1. In terms of biological role, catalyzes the irreversible transfer of a propylamine group from the amino donor S-adenosylmethioninamine (decarboxy-AdoMet) to putrescine (1,4-diaminobutane) to yield spermidine. The polypeptide is Polyamine aminopropyltransferase (Bacillus cytotoxicus (strain DSM 22905 / CIP 110041 / 391-98 / NVH 391-98)).